The primary structure comprises 164 residues: C-type lectin 1 (164 aa).

The N-terminal stretch at 1–23 (MGRFLFASLGLLVVAFSLSGTGA) is a signal peptide. Intrachain disulfides connect C27/C38, C55/C154, and C129/C146. A C-type lectin domain is found at 34–155 (YNVSCYKLFY…CTLLHPFLCQ (122 aa)). N-linked (GlcNAc...) asparagine glycosylation is found at N35 and N109. A Mannose-binding motif is present at residues 119–121 (EPN). Ca(2+) contacts are provided by E127, N142, and D143.

This sequence belongs to the true venom lectin family. In terms of tissue distribution, expressed by the venom gland.

The protein resides in the secreted. Functionally, mannose-binding lectin which recognizes specific carbohydrate structures and agglutinates a variety of animal cells by binding to cell-surface glycoproteins and glycolipids. May be a calcium-dependent lectin. In Hydrophis hardwickii (Hardwick's spine-bellied seasnake), this protein is C-type lectin 1.